The chain runs to 150 residues: UPF0336 protein SCO4636 (150 aa).

A MaoC-like domain is found at 8 to 116 (VGRSYPPTAP…STIEAIKSMA (109 aa)).

Belongs to the UPF0336 family.

In Streptomyces coelicolor (strain ATCC BAA-471 / A3(2) / M145), this protein is UPF0336 protein SCO4636.